A 266-amino-acid polypeptide reads, in one-letter code: uncharacterized protein (266 aa).

An N-terminal signal peptide occupies residues 1–22 (MGYLKRLVLYIVIMVMSVFIIG). Cys23 is lipidated: N-palmitoyl cysteine. Cys23 carries the S-diacylglycerol cysteine lipid modification.

It belongs to the staphylococcal tandem lipoprotein family.

It is found in the cell membrane. This is an uncharacterized protein from Staphylococcus aureus (strain USA300).